A 420-amino-acid polypeptide reads, in one-letter code: Histidine--tRNA ligase (420 aa).

Belongs to the class-II aminoacyl-tRNA synthetase family. In terms of assembly, homodimer.

The protein localises to the cytoplasm. It catalyses the reaction tRNA(His) + L-histidine + ATP = L-histidyl-tRNA(His) + AMP + diphosphate + H(+). The sequence is that of Histidine--tRNA ligase from Thermotoga sp. (strain RQ2).